The primary structure comprises 1588 residues: Paternally-expressed gene 3 protein (1588 aa).

One can recognise an SCAN box domain in the interval 46–128 (HQRFRNLIYV…TLLENYKEMY (83 aa)). Disordered stretches follow at residues 128–230 (YQPE…ESYQ), 266–306 (DGHS…RRGI), and 319–349 (KFIKDVSRSSKSGRARESSDRSQRFPRMSDD). A compositionally biased stretch (acidic residues) spans 129–142 (QPEDDNNSDVTSDD). Basic and acidic residues-rich tracts occupy residues 143–152 (DMTRNRRESS), 161–182 (SGDRDWDRRGRSRDMEPRDRWS), 206–225 (FEMDRDDDRDSRAYESRSQD), and 295–306 (PEAKKSTHRRGI). 3 C2H2-type zinc fingers span residues 454 to 476 (YVCDECGRSFSVISEFVEHQIMH), 507 to 529 (FECKDCGETFNKSAALAEHRKIH), and 565 to 587 (YECRVCKETFLHSSALIEHQKIH). Over residues 588 to 607 (FGDDKDNEREHERERERGET) the composition is skewed to basic and acidic residues. The segment at 588-610 (FGDDKDNEREHERERERGETFRP) is disordered. Residues 627–649 (YECKVCGETFLHSSSLKEHQKIH) form a C2H2-type 4 zinc finger. The tract at residues 838-930 (LVASKPPRSH…EFSVPSSNVR (93 aa)) is disordered. Residues 868–881 (LNDKRQKIPARENP) show a composition bias toward basic and acidic residues. The segment at 969 to 991 (YECQECGECFAHSSDLTEHQKIH) adopts a C2H2-type 5 zinc-finger fold. The disordered stretch occupies residues 1056 to 1104 (EKSHGEESQGENTDGEETHSEETHGQETIEDPVIQGSDMEDPQKDDPDD). Residues 1071 to 1082 (EETHSEETHGQE) are compositionally biased toward basic and acidic residues. 5 C2H2-type zinc fingers span residues 1107 to 1129 (YECEDCGLGFVDLTDLTDHQKVH), 1163 to 1185 (YECPKCGESFIHSSFLFEHQRIH), 1225 to 1247 (IRCLLCGQGFIHSSALNEHMRLH), 1282 to 1304 (FECAVCGESFINPAELADHVTVH), and 1332 to 1354 (YECKDCGKSFIHSTVLTKHKELH). Residues 1395-1415 (AEPEVEAAEPEVEAAEPEVEA) are compositionally biased toward acidic residues. Positions 1395–1495 (AEPEVEAAEP…GIEDPEEGED (101 aa)) are disordered. A run of 7 repeats spans residues 1397–1403 (PEVEAAE), 1404–1410 (PEVEAAE), 1411–1417 (PEVEAAE), 1418–1422 (PNGEA), 1425–1429 (PDGEA), 1432–1436 (PIGEA), and 1439–1443 (PNGEA). The 3 X 7 AA repeat of P-E-V-E-A-A-E stretch occupies residues 1397–1417 (PEVEAAEPEVEAAEPEVEAAE). The tract at residues 1418-1443 (PNGEAEGPDGEAAEPIGEAGQPNGEA) is 4 X 5 AA repeat of P-X-G-E-A. Composition is skewed to acidic residues over residues 1449-1466 (DADEPDGAGIEDPEERAE) and 1475-1495 (PEGDADEPDGVGIEDPEEGED). 2 C2H2-type zinc fingers span residues 1505 to 1527 (YDCHECTETFTSSTAFGEHLKTH) and 1564 to 1586 (FKCDVCGQLFNDRLSLARHQNTH).

Belongs to the krueppel C2H2-type zinc-finger protein family. Homodimer. Interacts with SIAH1A and SIAH2. Interacts with TRAF2.

The protein resides in the nucleus. Its subcellular location is the cytoplasm. Induces apoptosis in cooperation with SIAH1A. Acts as a mediator between p53/TP53 and BAX in a neuronal death pathway that is activated by DNA damage. Acts synergistically with TRAF2 and inhibits TNF induced apoptosis through activation of NF-kappa-B. The polypeptide is Paternally-expressed gene 3 protein (PEG3) (Pan troglodytes (Chimpanzee)).